The sequence spans 432 residues: MYYCISFTHKNTDIALREKLSFSNEAKKSEFLKIISTHENIEECLVISTCNRVEIVAFVKMACAEFIVKSLALLCDVDKDILLEKADIFEDSGAIHHLFSVASSLDSLVVGETQIAGQLKDAFAFAVKNNFCGVHLSRAVHSAFKCAAKVRNETQISKNSISVASVAVAKAKELADLTQKKAVVIGAGEMGELAAKHLIAAGAKVIILNRDLQKAKDLCERLGVLSEYDSLENLKKYLNQYEFFFSATNAPNAIITNSLVEELSYKRYFFDIAVPRDIDINENENISVFAVDDLEIVVQKNLALREQEARMAYGIIGRETSEFFRYLNDLALMPIIKAIRLQAKEYADKQLEIALKKGYLKKSDKEEARKLIHQVFKAFLHTPTVNLKHLQGKMQSDTVINAMRYVFDLQNNLEGLNQYKCEFDMENNDEIY.

Substrate is bound by residues 49–52, serine 107, 112–114, and glutamine 118; these read TCNR and ETQ. The active-site Nucleophile is the cysteine 50. 186-191 contributes to the NADP(+) binding site; the sequence is GAGEMG.

The protein belongs to the glutamyl-tRNA reductase family. Homodimer.

It catalyses the reaction (S)-4-amino-5-oxopentanoate + tRNA(Glu) + NADP(+) = L-glutamyl-tRNA(Glu) + NADPH + H(+). It functions in the pathway porphyrin-containing compound metabolism; protoporphyrin-IX biosynthesis; 5-aminolevulinate from L-glutamyl-tRNA(Glu): step 1/2. Its function is as follows. Catalyzes the NADPH-dependent reduction of glutamyl-tRNA(Glu) to glutamate 1-semialdehyde (GSA). The protein is Glutamyl-tRNA reductase of Campylobacter jejuni subsp. jejuni serotype O:23/36 (strain 81-176).